Consider the following 428-residue polypeptide: Cell number regulator 13 (428 aa).

Residues 233–280 show a composition bias toward basic and acidic residues; that stretch reads PEKETNVKAPEKKGSNYSESKGETAKSFDDDDDYPKKQNGDYPKKQKD. The segment at 233 to 290 is disordered; the sequence is PEKETNVKAPEKKGSNYSESKGETAKSFDDDDDYPKKQNGDYPKKQKDTCSTQRCSSQ. Positions 281–290 are enriched in polar residues; sequence TCSTQRCSSQ. A helical transmembrane segment spans residues 354–370; the sequence is IMAYSLILSCCCYTCCV.

Expressed in roots, coleoptiles, leaves, stalks, apical meristems, immature ears, embryos, endosperm, pericarp, silks and tassel spikelets. Not detected in pollen.

The protein localises to the membrane. This Zea mays (Maize) protein is Cell number regulator 13 (CNR13).